The sequence spans 138 residues: DASH complex subunit DAD2 (138 aa).

The span at 1–14 (MSGFSSRPLSTHLR) shows a compositional bias: polar residues. 2 disordered regions span residues 1–25 (MSGF…QGQS) and 116–138 (PTEH…SGRG).

Belongs to the DASH complex DAD2 family. Component of the DASH complex consisting of ASK1, DAD1, DAD2, DAD3, DAD4, DAM1, DUO1, HSK3, SPC19 and SPC34, with a stoichiometry of one copy of each subunit per complex. Multiple DASH complexes oligomerize to form a ring that encircles spindle microtubules and organizes the rod-like NDC80 complexes of the outer kinetochore. DASH complex oligomerization strengthens microtubule attachments. On cytoplasmic microtubules, DASH complexes appear to form patches instead of rings.

The protein resides in the chromosome. Its subcellular location is the centromere. The protein localises to the kinetochore. It localises to the cytoplasm. It is found in the cytoskeleton. The protein resides in the spindle. Its subcellular location is the nucleus. In terms of biological role, component of the DASH complex that connects microtubules with kinetochores and couples microtubule depolymerisation to chromosome movement; it is involved in retrieving kinetochores to the spindle poles before their re-orientation on the spindle in early mitosis and allows microtubule depolymerization to pull chromosomes apart and resist detachment during anaphase. Kinetochores, consisting of a centromere-associated inner segment and a microtubule-contacting outer segment, play a crucial role in chromosome segregation by mediating the physical connection between centromeric DNA and microtubules. Kinetochores also serve as an input point for the spindle assembly checkpoint, which delays anaphase until all chromosomes have bioriented on the mitotic spindle. The polypeptide is DASH complex subunit DAD2 (Chaetomium thermophilum (strain DSM 1495 / CBS 144.50 / IMI 039719) (Thermochaetoides thermophila)).